The sequence spans 397 residues: P-selectin glycoprotein ligand 1 (397 aa).

Positions 1–17 (MSPSFLVLLTILGPGNS) are cleaved as a signal peptide. A propeptide spanning residues 18 to 41 (LQLQDPWGHETKEAPGPVHLRERR) is cleaved from the precursor. Topologically, residues 18 to 307 (LQLQDPWGHE…SSDLIPVKQC (290 aa)) are extracellular. Residue tyrosine 54 is modified to Sulfotyrosine. An O-linked (GalNAc...) threonine glycan is attached at threonine 58. An N-linked (GlcNAc...) asparagine glycan is attached at asparagine 66. The segment at 89–261 (TSAGTSERAT…TMETASTESN (173 aa)) is disordered. Positions 120-198 (STDSATQWSL…PMEAETSQPA (79 aa)) are enriched in polar residues. 10 consecutive repeat copies span residues 126–135 (QWSLTSVETV), 136–145 (QPASTEVETS), 146–155 (QPAPMEAETS), 156–165 (QPAPMEAETS), 166–175 (QPAPMEAETS), 176–185 (QPAPMEADTS), 186–195 (QPAPMEAETS), 196–205 (QPAPNEAETS), 206–215 (KPAPTEAETS), and 216–225 (KPAPTEAETT). The interval 126-225 (QWSLTSVETV…KPAPTEAETT (100 aa)) is 10 X 10 AA tandem repeats. Polar residues predominate over residues 236 to 261 (LFTTSAATEVPSTEPTTMETASTESN). Asparagine 261 carries an N-linked (GlcNAc...) asparagine glycan. Residues 308 to 328 (LLIILILASLATIFLVCTVVL) form a helical membrane-spanning segment. The Cytoplasmic segment spans residues 329-397 (AVRLSRKTHM…DDLTLHSFLP (69 aa)). The segment at 364–390 (PVTANGGLPKVQDLKTEPSGDRDGDDL) is disordered. The segment covering 375–390 (QDLKTEPSGDRDGDDL) has biased composition (basic and acidic residues). Threonine 391 carries the post-translational modification Phosphothreonine. Serine 394 is subject to Phosphoserine.

As to quaternary structure, homodimer; disulfide-linked. Interacts with P- and E-selectins, through their lectin/EGF domains. Interaction with P-selectin requires sialyl Lewis X glycan modification and tyrosine sulfation, probably on Tyr-54, for high affinity binding. Dimerization appears not to be required for P-selectin/SELP binding. Interacts with SNX20. Interacts with MSN and SYK; mediates SYK activation downstream of SELPLG. Interacts with HAVCR1. Displays complex, core-2, sialylated and fucosylated O-linked oligosaccharides, at least some of which appear to contain poly-N-acetyllactosamine with varying degrees of substitution. Mainly disialylated or neutral forms of the core-2 tetrasaccharide, Galbeta1--&gt;4GlcNAcbeta1--&gt;6(Galbeta1--&gt;3)GalNAcOH. The GlcN:GalN ratio is approximately 2:1 and the Man:Fuc ratio 3:5. Contains about 14% fucose with alpha-1,3 linkage present in two forms: One species is a disialylated, monofucosylated glycan, and the other, a monosialylated, trifucosylated glycan with a polylactosamine backbone. The fucosylated forms carry the Lewis antigen and are important for interaction with selectins and for functioning. No sulfated O-glycans. Some N-glycosylation. In terms of tissue distribution, highly expressed in blood, bone marrow, brain, adipose tissue, spleen, and thymus. Also expressed in heart, kidney, liver, muscle, ovary, and stomach.

It localises to the cell membrane. An SLe(x)-type proteoglycan, which through high affinity, calcium-dependent interactions with E- and P-selectins, mediates rapid rolling of leukocytes over vascular surfaces during the initial steps in inflammation. Critical for the initial leukocyte capture. This Mus musculus (Mouse) protein is P-selectin glycoprotein ligand 1 (Selplg).